The chain runs to 447 residues: Asparagine--tRNA ligase (447 aa).

Belongs to the class-II aminoacyl-tRNA synthetase family. As to quaternary structure, homodimer.

It is found in the cytoplasm. It catalyses the reaction tRNA(Asn) + L-asparagine + ATP = L-asparaginyl-tRNA(Asn) + AMP + diphosphate + H(+). The protein is Asparagine--tRNA ligase of Streptococcus pneumoniae serotype 4 (strain ATCC BAA-334 / TIGR4).